The primary structure comprises 849 residues: Serrate RNA effector molecule homolog A (849 aa).

Disordered stretches follow at residues 1–90 and 276–409; these read MADS…HGSD and KREA…PRPL. Basic and acidic residues-rich tracts occupy residues 8–73, 276–306, and 314–342; these read YDRR…RHDL, KREA…KPEN, and EKPV…ETRK. The segment covering 354–364 has biased composition (acidic residues); it reads SDDGSDSESDT. A compositionally biased stretch (basic and acidic residues) spans 381 to 405; the sequence is RAEETPKKEEDTEKQKEKQKEDTVK.

The protein belongs to the ARS2 family. As to quaternary structure, interacts ncbp1/cbp80.

The protein resides in the nucleus. The protein localises to the nucleoplasm. It localises to the cytoplasm. Acts as a mediator between the cap-binding complex (CBC) and the primary microRNAs (miRNAs) processing machinery during cell proliferation. Contributes to the stability and delivery of capped primary miRNA transcripts to the primary miRNA processing complex, thereby playing a role in RNA-mediated gene silencing (RNAi) by miRNAs. The chain is Serrate RNA effector molecule homolog A (srrt-a) from Xenopus laevis (African clawed frog).